Reading from the N-terminus, the 208-residue chain is Small ribosomal subunit protein uS4 (208 aa).

The 61-residue stretch at 98 to 158 (RRLDNVVYRL…EKNRKISVVA (61 aa)) folds into the S4 RNA-binding domain.

The protein belongs to the universal ribosomal protein uS4 family. In terms of assembly, part of the 30S ribosomal subunit. Contacts protein S5. The interaction surface between S4 and S5 is involved in control of translational fidelity.

One of the primary rRNA binding proteins, it binds directly to 16S rRNA where it nucleates assembly of the body of the 30S subunit. Its function is as follows. With S5 and S12 plays an important role in translational accuracy. This is Small ribosomal subunit protein uS4 from Lawsonia intracellularis (strain PHE/MN1-00).